The chain runs to 971 residues: Reversion-inducing cysteine-rich protein with Kazal motifs (971 aa).

The first 22 residues, 1 to 22 (MATVRASLRGALLLLLAVAGVA), serve as a signal peptide directing secretion. Residues 37-84 (CCNHSKDNQMCRDVCEQIFSSKSESRLKHLLQRAPDYCPETMVEIWNC) form a Knot 1 repeat. The tract at residues 37 to 338 (CCNHSKDNQM…NPVEVSMLTC (302 aa)) is 5 X Knot repeats. N-linked (GlcNAc...) asparagine glycans are attached at residues N39 and N86. 2 Knot repeats span residues 104-141 (CCEL…LFSC) and 151-197 (CCSY…LIHC). N-linked (GlcNAc...) asparagine glycosylation occurs at N200. Knot repeat units lie at residues 216–263 (CCDR…LWQC) and 292–338 (CCSK…MLTC). N297 and N352 each carry an N-linked (GlcNAc...) asparagine glycan. Kazal-like domains lie at 627-673 (TFTG…SCMS), 698-752 (TFDK…PCQP), and 753-789 (FCRA…DCQA). Intrachain disulfides connect C633–C658, C635–C654, C643–C671, C716–C735, C724–C750, and C761–C787. S942 carries GPI-anchor amidated serine lipidation. Residues 943–971 (AGVRARPSCHSLLLPLSLGLALHLLWTYN) constitute a propeptide, removed in mature form.

The protein belongs to the RECK family. In terms of assembly, interacts (via knot repeats) with WNT7A (via disordered linker region); the interaction is direct. Interacts (via knot repeats) with WNT7B (via disordered linker region); the interaction is direct. Interacts with ADGRA2; the interaction is direct. Interacts with MMP9. Post-translationally, N-glycosylated. Expressed in various tissues and untransformed cells. It is undetectable in tumor-derived cell lines and oncogenically transformed cells.

It localises to the cell membrane. Functionally, functions together with ADGRA2 to enable brain endothelial cells to selectively respond to Wnt7 signals (WNT7A or WNT7B). Plays a key role in Wnt7-specific responses: required for central nervous system (CNS) angiogenesis and blood-brain barrier regulation. Acts as a Wnt7-specific coactivator of canonical Wnt signaling by decoding Wnt ligands: acts by interacting specifically with the disordered linker region of Wnt7, thereby conferring ligand selectivity for Wnt7. ADGRA2 is then required to deliver RECK-bound Wnt7 to frizzled by assembling a higher-order RECK-ADGRA2-Fzd-LRP5-LRP6 complex. Also acts as a serine protease inhibitor: negatively regulates matrix metalloproteinase-9 (MMP9) by suppressing MMP9 secretion and by direct inhibition of its enzymatic activity. Also inhibits metalloproteinase activity of MMP2 and MMP14 (MT1-MMP). This Homo sapiens (Human) protein is Reversion-inducing cysteine-rich protein with Kazal motifs.